We begin with the raw amino-acid sequence, 433 residues long: F-box/kelch-repeat protein At1g24800 (433 aa).

Residues Thr23 to Gln71 form the F-box domain. 2 Kelch repeats span residues His170–Val216 and Val286–Asn337.

This Arabidopsis thaliana (Mouse-ear cress) protein is F-box/kelch-repeat protein At1g24800.